The following is a 287-amino-acid chain: Large ribosomal subunit protein uL2 (287 aa).

Positions 221-287 are disordered; the sequence is RGSVMNPCDH…SKRSRGGRDS (67 aa). Basic residues predominate over residues 271–287; the sequence is LRKRRKTSKRSRGGRDS.

Belongs to the universal ribosomal protein uL2 family. In terms of assembly, part of the 50S ribosomal subunit. Forms a bridge to the 30S subunit in the 70S ribosome.

Its function is as follows. One of the primary rRNA binding proteins. Required for association of the 30S and 50S subunits to form the 70S ribosome, for tRNA binding and peptide bond formation. It has been suggested to have peptidyltransferase activity; this is somewhat controversial. Makes several contacts with the 16S rRNA in the 70S ribosome. This is Large ribosomal subunit protein uL2 from Synechococcus sp. (strain CC9902).